The primary structure comprises 498 residues: ATP synthase subunit beta, chloroplastic (498 aa).

ATP is bound at residue G172 to T179.

It belongs to the ATPase alpha/beta chains family. F-type ATPases have 2 components, CF(1) - the catalytic core - and CF(0) - the membrane proton channel. CF(1) has five subunits: alpha(3), beta(3), gamma(1), delta(1), epsilon(1). CF(0) has four main subunits: a(1), b(1), b'(1) and c(9-12).

The protein localises to the plastid. The protein resides in the chloroplast thylakoid membrane. The enzyme catalyses ATP + H2O + 4 H(+)(in) = ADP + phosphate + 5 H(+)(out). In terms of biological role, produces ATP from ADP in the presence of a proton gradient across the membrane. The catalytic sites are hosted primarily by the beta subunits. The protein is ATP synthase subunit beta, chloroplastic of Atropa belladonna (Belladonna).